Here is a 773-residue protein sequence, read N- to C-terminus: Subtilisin-like protease SBT3.4 (773 aa).

An N-terminal signal peptide occupies residues 1–23 (MRNFRSSVLVVLSLIIVLNVARA). The propeptide at 24–108 (SAKSKVHIVY…VIPDSYYELA (85 aa)) is activation peptide. The Inhibitor I9 domain maps to 29-108 (VHIVYLGEKQ…VIPDSYYELA (80 aa)). Residues 112–620 (IWDYLGPSAD…GGLVNPEKAA (509 aa)) form the Peptidase S8 domain. The Charge relay system role is filled by aspartate 142. An N-linked (GlcNAc...) asparagine glycan is attached at asparagine 200. Histidine 216 serves as the catalytic Charge relay system. N-linked (GlcNAc...) asparagine glycosylation is found at asparagine 231, asparagine 408, and asparagine 536. In terms of domain architecture, PA spans 382–474 (SLVYPEDPGN…IDNELGTDIL (93 aa)). The Charge relay system role is filled by serine 551. Asparagine 643 carries an N-linked (GlcNAc...) asparagine glycan.

Belongs to the peptidase S8 family.

Its subcellular location is the secreted. The polypeptide is Subtilisin-like protease SBT3.4 (Arabidopsis thaliana (Mouse-ear cress)).